Consider the following 111-residue polypeptide: Ig kappa chain V-III region PC 7175 (111 aa).

The interval 1 to 23 (DIVLTQSPASLAVSLGQRATISC) is framework-1. A disulfide bridge links cysteine 23 with cysteine 92. The complementarity-determining-1 stretch occupies residues 24–38 (RASKSVSTSGYSYMH). Residues 39-53 (WYQQKPGQPPKLLIY) form a framework-2 region. The tract at residues 54 to 60 (LASNLES) is complementarity-determining-2. The interval 61–92 (GVPARFSGSGSGTDFTLNIHPVEEEDAATYYC) is framework-3. Residues 93 to 101 (QHSRELPLT) form a complementarity-determining-3 region. Residues 102–111 (FGAGTKLELK) are framework-4.

This Mus musculus (Mouse) protein is Ig kappa chain V-III region PC 7175.